The following is a 255-amino-acid chain: Small ribosomal subunit protein uS2 (255 aa).

Residues 230–255 (QSSSGRDLGASSEVPVEPALEEAAEG) form a disordered region.

Belongs to the universal ribosomal protein uS2 family.

This is Small ribosomal subunit protein uS2 from Rhizobium leguminosarum bv. trifolii (strain WSM2304).